Consider the following 347-residue polypeptide: Quinolinate synthase (347 aa).

2 residues coordinate iminosuccinate: H47 and S68. C113 provides a ligand contact to [4Fe-4S] cluster. Iminosuccinate is bound by residues 139-141 (YAN) and S156. C200 contacts [4Fe-4S] cluster. Iminosuccinate is bound by residues 226 to 228 (HPE) and T243. C297 contacts [4Fe-4S] cluster.

Belongs to the quinolinate synthase family. Type 1 subfamily. [4Fe-4S] cluster is required as a cofactor.

The protein resides in the cytoplasm. It catalyses the reaction iminosuccinate + dihydroxyacetone phosphate = quinolinate + phosphate + 2 H2O + H(+). The protein operates within cofactor biosynthesis; NAD(+) biosynthesis; quinolinate from iminoaspartate: step 1/1. In terms of biological role, catalyzes the condensation of iminoaspartate with dihydroxyacetone phosphate to form quinolinate. The protein is Quinolinate synthase of Escherichia coli O7:K1 (strain IAI39 / ExPEC).